A 226-amino-acid polypeptide reads, in one-letter code: DELTA-thalatoxin-Avl1b (226 aa).

The first 21 residues, 1 to 21 (MRHFVVFLYMFLALSIPTAFA), serve as a signal peptide directing secretion. A propeptide spanning residues 22–45 (KKHIVTKKGNHQDITNDNEGENAE) is cleaved from the precursor. The plays an important role in the hemolytic activity stretch occupies residues 50-59 (AVAGAVIAGG). Positions 58–77 (GGELALKILTKILDEIGKID) are N-terminal region. Positions 101, 134, 152, 154, 180, and 184 each coordinate phosphocholine. Positions 152-167 (SVPFDYNLYTNWWNVK) are trp-rich region, which is important for the binding to lipid membrane. The Cell attachment site, crucial for protein stability signature appears at 191-193 (KPS).

It belongs to the actinoporin family. Sea anemone subfamily. Octamer or nonamer in membranes. Monomer in the soluble state.

The protein localises to the secreted. It localises to the nematocyst. The protein resides in the target cell membrane. Functionally, pore-forming protein that forms cations-selective hydrophilic pores of around 1 nm and causes cytolysis. Pore formation is a multi-step process that involves specific recognition of membrane sphingomyelin (but neither cholesterol nor phosphatidylcholine) using aromatic rich region and adjacent phosphocholine (POC) binding site, firm binding to the membrane (mainly driven by hydrophobic interactions) accompanied by the transfer of the N-terminal region to the lipid-water interface and finally pore formation after oligomerization of monomers. In Actineria villosa (Okinawan sea anemone), this protein is DELTA-thalatoxin-Avl1b.